Consider the following 266-residue polypeptide: 3-methyl-2-oxobutanoate hydroxymethyltransferase (266 aa).

Residues aspartate 45 and aspartate 84 each coordinate Mg(2+). Residues 45 to 46 (DS), aspartate 84, and lysine 112 contribute to the 3-methyl-2-oxobutanoate site. Residue glutamate 114 participates in Mg(2+) binding. Glutamate 181 acts as the Proton acceptor in catalysis.

The protein belongs to the PanB family. In terms of assembly, homodecamer; pentamer of dimers. Mg(2+) serves as cofactor.

Its subcellular location is the cytoplasm. It carries out the reaction 3-methyl-2-oxobutanoate + (6R)-5,10-methylene-5,6,7,8-tetrahydrofolate + H2O = 2-dehydropantoate + (6S)-5,6,7,8-tetrahydrofolate. It participates in cofactor biosynthesis; (R)-pantothenate biosynthesis; (R)-pantoate from 3-methyl-2-oxobutanoate: step 1/2. In terms of biological role, catalyzes the reversible reaction in which hydroxymethyl group from 5,10-methylenetetrahydrofolate is transferred onto alpha-ketoisovalerate to form ketopantoate. This chain is 3-methyl-2-oxobutanoate hydroxymethyltransferase, found in Pseudomonas syringae pv. tomato (strain ATCC BAA-871 / DC3000).